The chain runs to 237 residues: Mitochondrial inner membrane protease atp23 (237 aa).

Residue His-136 participates in a divalent metal cation binding. Glu-137 is an active-site residue. His-140 serves as a coordination point for a divalent metal cation.

The protein belongs to the peptidase M76 family.

The protein resides in the mitochondrion inner membrane. Functionally, has a dual role in the assembly of mitochondrial ATPase. Acts as a protease that removes N-terminal residues of mitochondrial ATPase CF(0) subunit 6 at the intermembrane space side. Also involved in the correct assembly of the membrane-embedded ATPase CF(0) particle, probably mediating association of subunit 6 with the subunit 9 ring. This chain is Mitochondrial inner membrane protease atp23 (atp23), found in Aspergillus clavatus (strain ATCC 1007 / CBS 513.65 / DSM 816 / NCTC 3887 / NRRL 1 / QM 1276 / 107).